A 390-amino-acid chain; its full sequence is GTPase Obg (390 aa).

The 159-residue stretch at 1 to 159 folds into the Obg domain; that stretch reads MKFVDEATIL…RELTLELLLL (159 aa). The segment at 128–147 is disordered; it reads SRFKSSVNRAPRQKTNGTKG. Polar residues predominate over residues 129–145; the sequence is RFKSSVNRAPRQKTNGT. The OBG-type G domain occupies 160 to 333; that stretch reads ADVGMLGLPN…LCWDVMNFLK (174 aa). GTP contacts are provided by residues 166–173, 191–195, 213–216, 283–286, and 314–316; these read GLPNAGKS, FTTLV, DIPG, NKVD, and SAA. Positions 173 and 193 each coordinate Mg(2+).

The protein belongs to the TRAFAC class OBG-HflX-like GTPase superfamily. OBG GTPase family. Monomer. Mg(2+) is required as a cofactor.

It localises to the cytoplasm. An essential GTPase which binds GTP, GDP and possibly (p)ppGpp with moderate affinity, with high nucleotide exchange rates and a fairly low GTP hydrolysis rate. Plays a role in control of the cell cycle, stress response, ribosome biogenesis and in those bacteria that undergo differentiation, in morphogenesis control. The chain is GTPase Obg from Pectobacterium atrosepticum (strain SCRI 1043 / ATCC BAA-672) (Erwinia carotovora subsp. atroseptica).